The sequence spans 155 residues: Deoxyuridine 5'-triphosphate nucleotidohydrolase (155 aa).

Residues 74 to 76 (RSG), Asn87, and 91 to 93 (LID) contribute to the substrate site.

The protein belongs to the dUTPase family. The cofactor is Mg(2+).

It carries out the reaction dUTP + H2O = dUMP + diphosphate + H(+). The protein operates within pyrimidine metabolism; dUMP biosynthesis; dUMP from dCTP (dUTP route): step 2/2. Functionally, this enzyme is involved in nucleotide metabolism: it produces dUMP, the immediate precursor of thymidine nucleotides and it decreases the intracellular concentration of dUTP so that uracil cannot be incorporated into DNA. This Xylella fastidiosa (strain M23) protein is Deoxyuridine 5'-triphosphate nucleotidohydrolase.